The following is a 539-amino-acid chain: Tyrosinase (539 aa).

Cu cation-binding residues include His-63, His-84, His-93, His-290, His-294, and His-333. Positions 82-84 (CHH) form a cross-link, 2'-(S-cysteinyl)-histidine (Cys-His).

This sequence belongs to the tyrosinase family. In terms of assembly, homotetramer. It depends on Cu(2+) as a cofactor. Post-translationally, the N-terminus is blocked.

The catalysed reaction is 2 L-dopa + O2 = 2 L-dopaquinone + 2 H2O. It carries out the reaction L-tyrosine + O2 = L-dopaquinone + H2O. Its activity is regulated as follows. Activated by acidifying treatment at pH 3.0. Functionally, this is a copper-containing oxidase that functions in the formation of pigments such as melanins and other polyphenolic compounds. This chain is Tyrosinase (melO), found in Aspergillus oryzae (strain ATCC 42149 / RIB 40) (Yellow koji mold).